We begin with the raw amino-acid sequence, 160 residues long: Nucleotide-binding protein ASA_3207 (160 aa).

The protein belongs to the YajQ family.

In terms of biological role, nucleotide-binding protein. This Aeromonas salmonicida (strain A449) protein is Nucleotide-binding protein ASA_3207.